The chain runs to 81 residues: Sulfur carrier protein TusA (81 aa).

Catalysis depends on Cys-19, which acts as the Cysteine persulfide intermediate.

The protein belongs to the sulfur carrier protein TusA family.

The protein localises to the cytoplasm. Functionally, sulfur carrier protein which probably makes part of a sulfur-relay system. This Shewanella denitrificans (strain OS217 / ATCC BAA-1090 / DSM 15013) protein is Sulfur carrier protein TusA.